The chain runs to 286 residues: Putative L-ribulose-5-phosphate 3-epimerase SgbU (286 aa).

It belongs to the L-ribulose-5-phosphate 3-epimerase family.

The enzyme catalyses L-ribulose 5-phosphate = L-xylulose 5-phosphate. In terms of biological role, catalyzes the isomerization of L-xylulose-5-phosphate to L-ribulose-5-phosphate (Potential). May be involved in the utilization of 2,3-diketo-L-gulonate. In Escherichia coli (strain K12), this protein is Putative L-ribulose-5-phosphate 3-epimerase SgbU (sgbU).